Reading from the N-terminus, the 90-residue chain is Small ribosomal subunit protein uS15c (90 aa).

This sequence belongs to the universal ribosomal protein uS15 family. As to quaternary structure, part of the 30S ribosomal subunit.

It localises to the plastid. Its subcellular location is the chloroplast. The sequence is that of Small ribosomal subunit protein uS15c (rps15) from Lotus japonicus (Lotus corniculatus var. japonicus).